Here is a 450-residue protein sequence, read N- to C-terminus: Phosphoglucosamine mutase (450 aa).

Serine 101 functions as the Phosphoserine intermediate in the catalytic mechanism. Mg(2+) is bound by residues serine 101, aspartate 242, aspartate 244, and aspartate 246. At serine 101 the chain carries Phosphoserine.

The protein belongs to the phosphohexose mutase family. Requires Mg(2+) as cofactor. In terms of processing, activated by phosphorylation.

It carries out the reaction alpha-D-glucosamine 1-phosphate = D-glucosamine 6-phosphate. Its function is as follows. Catalyzes the conversion of glucosamine-6-phosphate to glucosamine-1-phosphate. This is Phosphoglucosamine mutase from Rhodopseudomonas palustris (strain ATCC BAA-98 / CGA009).